Here is a 69-residue protein sequence, read N- to C-terminus: Alternative ribosome-rescue factor A (69 aa).

This sequence belongs to the alternative ribosome-rescue factor A family. Interacts with the 70S ribosome and release factor 2.

In terms of biological role, rescues ribosomes stalled at the 3' end of non-stop mRNAs. Recruits release factor 2 (RF2) to the stalled ribosome, helping position it correctly in the ribosomal A site so its GGQ motif can hydrolyze the peptidyl-tRNA bond. The chain is Alternative ribosome-rescue factor A (arfA) from Haemophilus influenzae (strain ATCC 51907 / DSM 11121 / KW20 / Rd).